The primary structure comprises 490 residues: Aspartyl/glutamyl-tRNA(Asn/Gln) amidotransferase subunit B (490 aa).

Belongs to the GatB/GatE family. GatB subfamily. Heterotrimer of A, B and C subunits.

The catalysed reaction is L-glutamyl-tRNA(Gln) + L-glutamine + ATP + H2O = L-glutaminyl-tRNA(Gln) + L-glutamate + ADP + phosphate + H(+). It catalyses the reaction L-aspartyl-tRNA(Asn) + L-glutamine + ATP + H2O = L-asparaginyl-tRNA(Asn) + L-glutamate + ADP + phosphate + 2 H(+). Functionally, allows the formation of correctly charged Asn-tRNA(Asn) or Gln-tRNA(Gln) through the transamidation of misacylated Asp-tRNA(Asn) or Glu-tRNA(Gln) in organisms which lack either or both of asparaginyl-tRNA or glutaminyl-tRNA synthetases. The reaction takes place in the presence of glutamine and ATP through an activated phospho-Asp-tRNA(Asn) or phospho-Glu-tRNA(Gln). The protein is Aspartyl/glutamyl-tRNA(Asn/Gln) amidotransferase subunit B of Burkholderia thailandensis (strain ATCC 700388 / DSM 13276 / CCUG 48851 / CIP 106301 / E264).